Reading from the N-terminus, the 588-residue chain is Vesicular glutamate transporter 3 (588 aa).

At 1-76 the chain is on the cytoplasmic side; the sequence is MPFNAFDTFK…CSCCGIPKRY (76 aa). A helical transmembrane segment spans residues 77–97; sequence IIAVMSGLGFCISFGIRCNLG. The Vesicular portion of the chain corresponds to 98–130; the sequence is VAIVEMVNNSTVYVDGKPEIQTAQFNWDPETVG. An N-linked (GlcNAc...) asparagine glycan is attached at Asn-106. Residues 131–151 form a helical membrane-spanning segment; sequence LIHGSFFWGYIVTQIPGGFIS. The Cytoplasmic portion of the chain corresponds to 152-153; the sequence is NK. A helical transmembrane segment spans residues 154-174; it reads FAANRVFGAAIFLTSTLNMFI. The Vesicular portion of the chain corresponds to 175–182; it reads PSAARVHY. Residues 183–203 form a helical membrane-spanning segment; it reads GCVMCVRILQGLVEGVTYPAC. Over 204-221 the chain is Cytoplasmic; the sequence is HGMWSKWAPPLERSRLAT. The chain crosses the membrane as a helical span at residues 222–242; the sequence is TSFCGSYAGAVVAMPLAGVLV. Residues 243–249 lie on the Vesicular side of the membrane; sequence QYIGWAS. Residues 250 to 270 traverse the membrane as a helical segment; the sequence is VFYIYGMFGIIWYMFWLLQAY. Topologically, residues 271 to 314 are cytoplasmic; sequence ECPAVHPTISNEERTYIETSIGEGANLASLSKFNTPWRRFFTSL. A helical membrane pass occupies residues 315-335; that stretch reads PVYAIIVANFCRSWTFYLLLI. Residues 336 to 353 are Vesicular-facing; it reads SQPAYFEEVFGFAISKVG. Residues 354–374 traverse the membrane as a helical segment; the sequence is LLSAVPHMVMTIVVPIGGQLA. The Cytoplasmic segment spans residues 375–390; the sequence is DYLRSRKILTTTAVRK. The helical transmembrane segment at 391 to 411 threads the bilayer; it reads IMNCGGFGMEATLLLVVGFSH. Residues 412–413 are Vesicular-facing; sequence TK. Residues 414–434 form a helical membrane-spanning segment; the sequence is GVAISFLVLAVGFSGFAISGF. Over 435 to 447 the chain is Cytoplasmic; it reads NVNHLDIAPRYAS. Residues 448–468 traverse the membrane as a helical segment; that stretch reads ILMGISNGVGTLSGMVCPLIV. Over 469 to 481 the chain is Vesicular; that stretch reads GAMTKHKTREEWQ. A helical membrane pass occupies residues 482-502; that stretch reads NVFLIAALVHYSGVIFYGVFA. Residues 503–585 are Cytoplasmic-facing; the sequence is SGEKQDWADP…LSYQNEEDFS (83 aa). Residues 539 to 588 are disordered; sequence FVSPRKKMSYGATTQNCEVQKTDRRQQRESAFEGEEPLSYQNEEDFSETS. Over residues 558–569 the composition is skewed to basic and acidic residues; that stretch reads QKTDRRQQRESA. Residues 570–588 show a composition bias toward acidic residues; the sequence is FEGEEPLSYQNEEDFSETS.

This sequence belongs to the major facilitator superfamily. Sodium/anion cotransporter family. VGLUT subfamily. Expressed in brain, kidney and liver. Expressed within the amygdala, brainstem, cerberal cortex, dorsal root ganglia, dorsal spinal cord, hippocampus, hypothalamus, retina, striatum and ventral spinal cord. Expressed within neurons of the caudate-putamen, olfactory tubercle, nucleus accumbens, hippocampus, interpeduncular nucleus and dorsal and medial raphe nuclei. Expressed in inner hair cells of the ear. Expressed at synaptic terminals within the lateral superior olive (LSO), a nucleus of the mammalian sound localization system, and in the medial nucleus of the trapezoid body (MNTB), which provides inhibitory input to the LSO.

The protein localises to the cytoplasmic vesicle. It is found in the secretory vesicle. The protein resides in the synaptic vesicle membrane. Its subcellular location is the cell membrane. It localises to the synapse. The protein localises to the synaptosome. The catalysed reaction is L-glutamate(out) = L-glutamate(in). The enzyme catalyses chloride(in) = chloride(out). It catalyses the reaction 3 Na(+)(out) + phosphate(out) = 3 Na(+)(in) + phosphate(in). The L-glutamate uniporter activity exhibits a biphasic dependence on chloride concentration. Chloride channel activity is allosterically activated by lumenal H(+) and Cl(-) leading to synaptic vesicles acidification. The glutamate transport activity is allosterically activated by lumenal H(+) and Cl(-), preventing non-vesicular L-glutamate release. Functionally, multifunctional transporter that transports L-glutamate as well as multiple ions such as chloride, sodium and phosphate. At the synaptic vesicle membrane, mainly functions as an uniporter that mediates the uptake of L-glutamate into synaptic vesicles at presynaptic nerve terminals of excitatory neural cells. The L-glutamate uniporter activity is electrogenic and is driven by the proton electrochemical gradient, mainly by the electrical gradient established by the vacuolar H(+)-ATPase across the synaptic vesicle membrane. In addition, functions as a chloride channel that allows a chloride permeation through the synaptic vesicle membrane that affects the proton electrochemical gradient and promotes synaptic vesicles acidification. At the plasma membrane, following exocytosis, functions as a symporter of Na(+) and phosphate from the extracellular space to the cytoplasm allowing synaptic phosphate homeostasis regulation. The symporter activity is electrogenic. Moreover, operates synergistically with SLC18A3/VACHT under a constant H(+) gradient, thereby allowing striatal vesicular acetylcholine uptake. This Rattus norvegicus (Rat) protein is Vesicular glutamate transporter 3.